Reading from the N-terminus, the 246-residue chain is tRNA pseudouridine synthase A (246 aa).

Residue Asp-51 is the Nucleophile of the active site. Substrate is bound at residue Tyr-105.

It belongs to the tRNA pseudouridine synthase TruA family.

The enzyme catalyses uridine(38/39/40) in tRNA = pseudouridine(38/39/40) in tRNA. Functionally, formation of pseudouridine at positions 38, 39 and 40 in the anticodon stem and loop of transfer RNAs. The protein is tRNA pseudouridine synthase A of Thermoplasma volcanium (strain ATCC 51530 / DSM 4299 / JCM 9571 / NBRC 15438 / GSS1).